Consider the following 49-residue polypeptide: EDNLSDLEGKEEAGDWDGDDNVLTVAAFAILFILSFLYSTFVTVVKVQQ.

Asparagine 3 is a glycosylation site (N-linked (GlcNAc...) asparagine). A helical transmembrane segment spans residues 25-45 (VAAFAILFILSFLYSTFVTVV).

In terms of tissue distribution, expressed in the spleen. May also be expressed in other lymphoid tissues.

The protein resides in the membrane. In Heterodontus francisci (Horn shark), this protein is IgW transmembrane form Tm2T7/Tm7T7/Tm3T3.